Consider the following 384-residue polypeptide: Protein V (384 aa).

Disordered regions lie at residues 1–23 (MDQD…GGRE) and 38–318 (SEPT…KKGH). Over residues 7 to 20 (ILKEDSEVEREAPG) the composition is skewed to basic and acidic residues. Residues 50–59 (LHNTINTPQG) show a composition bias toward polar residues. The residue at position 68 (Ser68) is a Phosphoserine; by host. Residues 83–101 (RSGEESRVSGRTSKPEAEA) show a composition bias toward basic and acidic residues. Ser125 carries the phosphoserine; by host modification. Over residues 150–168 (GIEDENREMAAHPDKRGED) the composition is skewed to basic and acidic residues. The span at 191–206 (ASNNGRSMEPGSSHSA) shows a compositional bias: polar residues. Phosphoserine; by host occurs at positions 192, 249, 257, and 260. Zn(2+) contacts are provided by His318, Cys337, Cys341, Cys353, Cys355, Cys358, Cys362, and Cys365.

Belongs to the paramyxoviruses V protein family. As to quaternary structure, interacts with host IFIH1/MDA5 and DHX58/LGP2. Interacts with host IRF3. Interacts with host RIGI regulatory protein (via CARDs domain) and host TRIM25 (via SPRY domain); these interactions prevent TRIM25-mediated ubiquitination of RIG-I and disrupts downstream RIG-I signaling.

The protein localises to the host cytoplasm. Functionally, plays an essential role in the inhibition of host immune response. Prevents the establishment of cellular antiviral state by blocking interferon-alpha/beta (IFN-alpha/beta) production and signaling pathway. Interacts with host IFIH1/MDA5 and DHX58/LGP2 to inhibit the transduction pathway involved in the activation of IFN-beta promoter, thus protecting the virus against cell antiviral state. Also interacts with and inhibits host IRF3. Blocks the type I interferon signaling pathway by disrupting the RIG-I signaling pathway. The sequence is that of Protein V (P/V/C) from Sendai virus (strain Harris) (SeV).